Here is a 601-residue protein sequence, read N- to C-terminus: ATP-dependent rRNA helicase SPB4 (601 aa).

The short motif at 14–42 is the Q motif element; sequence LAWSQASLQPWIHDAIDSLGFRSMTPVQA. The 184-residue stretch at 45-228 folds into the Helicase ATP-binding domain; it reads IPLFCGNKDV…RTGMSNPVKI (184 aa). 58–65 contacts ATP; sequence AVTGSGKT. Positions 176–179 match the DEAD box motif; the sequence is DEAD. The 163-residue stretch at 257–419 folds into the Helicase C-terminal domain; it reads VLINMLSTLQ…AYKAFSKNLR (163 aa). Residues 507–575 adopt a coiled-coil conformation; sequence KEKIRLETME…QIMNESSDEE (69 aa). Residues 532–554 are compositionally biased toward basic and acidic residues; the sequence is LKVKNEAWSSKNEKKEGKQERRE. The segment at 532 to 576 is disordered; sequence LKVKNEAWSSKNEKKEGKQERREKMKRKREAIEKQIMNESSDEET.

Belongs to the DEAD box helicase family. DDX55/SPB4 subfamily. As to quaternary structure, component of pre-60S ribosomal complexes.

The protein localises to the nucleus. Its subcellular location is the nucleolus. The enzyme catalyses ATP + H2O = ADP + phosphate + H(+). Its function is as follows. ATP-binding RNA helicase involved in the biogenesis of 60S ribosomal subunits. Binds 90S pre-ribosomal particles and dissociates from pre-60S ribosomal particles after processing of 27SB pre-rRNA. Required for the normal formation of 18S rRNA through the processing of pre-rRNAs at sites A0, A1 and A2, and the normal formation of 25S and 5.8S rRNAs through the processing of pre-rRNAs at sites C1 and C2. This Meyerozyma guilliermondii (strain ATCC 6260 / CBS 566 / DSM 6381 / JCM 1539 / NBRC 10279 / NRRL Y-324) (Yeast) protein is ATP-dependent rRNA helicase SPB4.